Here is a 302-residue protein sequence, read N- to C-terminus: MSDSRRVPITFQGLIQTLNQYWAEQGCVLIQPLDLEVGAGTFHPATFLRALGPEPWNAAYVQPSRRPTDGRYGENPNRLQRYYQYQVAMKPNPDNIQDLYLGSLQALGIDPLVHDLRFVEDNWESPTLGAWGLGWEVWLNGMEVTQFTYFQQAGGLECKPVLGEITYGLERLCMYLQRCDNVYALVWTYGPDGAAVTYGDVYHQNEVEQSTYNFEHANVAELFHRFDACEAEAKHLVEVGLPLPAYEQVSKASHAFNLLDARRAISVTERQRYILRVRALAQGVAQAYYAQREKLGFPGVKQ.

It belongs to the class-II aminoacyl-tRNA synthetase family. Tetramer of two alpha and two beta subunits.

The protein localises to the cytoplasm. It catalyses the reaction tRNA(Gly) + glycine + ATP = glycyl-tRNA(Gly) + AMP + diphosphate. This is Glycine--tRNA ligase alpha subunit from Xanthomonas oryzae pv. oryzae (strain MAFF 311018).